An 842-amino-acid chain; its full sequence is MANILRKVIENDKGEIRKLEKIAKKVEAYADEMEALTDQELQAKTPEFKKRYQAGETLEDLLPEAFAVVREASRRVLGLYPYRVQIMGGVVLHNGDVPEMRTGEGKTLTATMPVYLNALAGEGVHVITVNEYLSTRDATEMGEVYSWLGLSVGINLAAKSPAEKREAYLCDITYSTNSEVGFDYLRDNMVVRQEDMVQRPLNFALVDEVDSVLIDEARTPLIVSGAVSSETNQLYVRADMFVKTLKEDDYIIDVPTKTIGLSDLGIDKAESYFNLNNLYDIDNVALTHFIDNALRANYIMLLDIDYVVSEDGEILIVDQFTGRTMEGRRFSDGLHQAIEAKEGVRIQEESKTSASITYQNMFRMYKKLAGMTGTAKTEEEEFREVYNMRIIPIPTNKPVARLDHTDLLYPTLASKFRAVIADVKARHEKGQPVLVGTVAVETSDYISKQLVAAGVPHEVLNAKNHFKEAQIIMNAGQRGAVTIATNMAGRGTDIKLGEGVRELGGLCVIGTERHESRRIDNQLRGRAGRQGDPGESQFYLSLEDDLMRRFGSDRIKAFLDRMRLEEEDAVIKSGMLARQVESAQKRVEGNNYDTRKQVLQYDDVMREQREIIYANRRDVITANRDLGPEIKAMIKRTIKRTVDAHARSNRNDAIDAIVAFARTNIVPEESISAKDLRSLKDDQIKEELYKRALAIYESQISKLHDQEAVLEFQKVLILMIVDNKWTEHIDALDQLRNSVGLRGYAQNNPVVEYQSEGFKMFQDMIGAIEFDVTRTMMKAQIHEQERERVSPNARTTAAQNIAAQSNQSSESSTQDYSHVKRNDLCPCGSGKKFKNCHGRKAF.

ATP contacts are provided by residues Gln85, 103–107 (GEGKT), and Asp493. Zn(2+) contacts are provided by Cys825, Cys827, Cys836, and His837.

This sequence belongs to the SecA family. In terms of assembly, monomer and homodimer. Part of the essential Sec protein translocation apparatus which comprises SecA, SecYEG and auxiliary proteins SecDF. Other proteins may also be involved. Zn(2+) serves as cofactor.

It localises to the cell membrane. The protein resides in the cytoplasm. It catalyses the reaction ATP + H2O + cellular proteinSide 1 = ADP + phosphate + cellular proteinSide 2.. Its function is as follows. Part of the Sec protein translocase complex. Interacts with the SecYEG preprotein conducting channel. Has a central role in coupling the hydrolysis of ATP to the transfer of proteins into and across the cell membrane, serving as an ATP-driven molecular motor driving the stepwise translocation of polypeptide chains across the membrane. This chain is Protein translocase subunit SecA, found in Streptococcus uberis (strain ATCC BAA-854 / 0140J).